The chain runs to 983 residues: UPF0182 protein KRH_08700 (983 aa).

Transmembrane regions (helical) follow at residues 22-42 (GALLPTVIAVVVLIALFVGFT), 67-87 (VIGLFVAAALIVAALMFLSLW), 116-136 (VVMVAVPLIFGLFAASTVATQ), 172-192 (LLIGFLVTALLLAGVAGLLMH), 213-233 (VHLGSIVAAFLALQAVNFWLD), 261-281 (GILAVAALLVAVLFVVAGFIG), and 288-308 (IGAAMLVVVAVVAGGLYPWAI). The interval 893–959 (GAKTDTGAGV…DKAMKDGDWT (67 aa)) is disordered. Over residues 947-959 (QDSDKAMKDGDWT) the composition is skewed to basic and acidic residues.

Belongs to the UPF0182 family.

Its subcellular location is the cell membrane. The polypeptide is UPF0182 protein KRH_08700 (Kocuria rhizophila (strain ATCC 9341 / DSM 348 / NBRC 103217 / DC2201)).